Consider the following 50-residue polypeptide: Large ribosomal subunit protein bL33 (50 aa).

Belongs to the bacterial ribosomal protein bL33 family.

This chain is Large ribosomal subunit protein bL33 (rpmG), found in Aquifex aeolicus (strain VF5).